A 147-amino-acid chain; its full sequence is Large ribosomal subunit protein bL9 (147 aa).

Belongs to the bacterial ribosomal protein bL9 family.

Functionally, binds to the 23S rRNA. The sequence is that of Large ribosomal subunit protein bL9 from Mycoplasma capricolum subsp. capricolum (strain California kid / ATCC 27343 / NCTC 10154).